The sequence spans 936 residues: Isoleucine--tRNA ligase (936 aa).

The short motif at 58–68 (PYANGNIHIGH) is the 'HIGH' region element. Position 560 (E560) interacts with L-isoleucyl-5'-AMP. The short motif at 601–605 (KMSKS) is the 'KMSKS' region element. K604 contacts ATP. Zn(2+) contacts are provided by C899, C902, C919, and C922.

Belongs to the class-I aminoacyl-tRNA synthetase family. IleS type 1 subfamily. Monomer. Zn(2+) serves as cofactor.

It is found in the cytoplasm. The enzyme catalyses tRNA(Ile) + L-isoleucine + ATP = L-isoleucyl-tRNA(Ile) + AMP + diphosphate. Catalyzes the attachment of isoleucine to tRNA(Ile). As IleRS can inadvertently accommodate and process structurally similar amino acids such as valine, to avoid such errors it has two additional distinct tRNA(Ile)-dependent editing activities. One activity is designated as 'pretransfer' editing and involves the hydrolysis of activated Val-AMP. The other activity is designated 'posttransfer' editing and involves deacylation of mischarged Val-tRNA(Ile). The polypeptide is Isoleucine--tRNA ligase (Proteus mirabilis (strain HI4320)).